Consider the following 407-residue polypeptide: Na(+)-translocating NADH-quinone reductase subunit F (407 aa).

A helical membrane pass occupies residues 3-23 (IILGVVMFTLIVLALTVMILF). A 2Fe-2S ferredoxin-type domain is found at 32–126 (GDITIDINED…NLKIELPEEI (95 aa)). [2Fe-2S] cluster is bound by residues cysteine 69, cysteine 75, cysteine 78, and cysteine 110. Residues 129-269 (VKKWECEVIS…SGPFGEFFAK (141 aa)) enclose the FAD-binding FR-type domain.

It belongs to the NqrF family. Composed of six subunits; NqrA, NqrB, NqrC, NqrD, NqrE and NqrF. The cofactor is [2Fe-2S] cluster. FAD serves as cofactor.

It is found in the cell inner membrane. It catalyses the reaction a ubiquinone + n Na(+)(in) + NADH + H(+) = a ubiquinol + n Na(+)(out) + NAD(+). NQR complex catalyzes the reduction of ubiquinone-1 to ubiquinol by two successive reactions, coupled with the transport of Na(+) ions from the cytoplasm to the periplasm. The first step is catalyzed by NqrF, which accepts electrons from NADH and reduces ubiquinone-1 to ubisemiquinone by a one-electron transfer pathway. The sequence is that of Na(+)-translocating NADH-quinone reductase subunit F from Yersinia enterocolitica serotype O:8 / biotype 1B (strain NCTC 13174 / 8081).